Reading from the N-terminus, the 74-residue chain is Ubiquitin-like protein FUBI (74 aa).

Belongs to the ubiquitin family.

Functionally, confers arsenite resistance. The polypeptide is Ubiquitin-like protein FUBI (FAU) (Cricetulus griseus (Chinese hamster)).